We begin with the raw amino-acid sequence, 606 residues long: Transcription factor glial cells missing 2 (606 aa).

The segment covering 20-37 has biased composition (polar residues); it reads DHSQLTQFVQPQSQSTHS. Disordered stretches follow at residues 20–65, 475–501, and 561–606; these read DHSQ…KGKR, EMQQ…HHYY, and TAPT…SVTH. A compositionally biased stretch (low complexity) spans 44-61; it reads PGQQQAGGSMTMPSSSTG. Residues 65 to 224 constitute a DNA-binding region (GCM); it reads REWDINDAIV…KNSSVSKRAF (160 aa). Residues 490–501 are compositionally biased toward polar residues; the sequence is FGGNQTAGHHYY. A compositionally biased stretch (pro residues) spans 569–580; sequence PGHPPPPPPPPT. Positions 583-593 are enriched in basic residues; that stretch reads YHHHHHHHLHH. Low complexity predominate over residues 594 to 606; that stretch reads PAAATGLAPSVTH.

In terms of tissue distribution, expressed in glial lineages within embryonic procephalic mesoderm. Expression is highest in hemocyte primordia and longitudinal and nerve root ganglia.

It localises to the nucleus. In terms of biological role, transcription factor with a minor role promoting glial cell differentiation and a more significant role in hematocyte differentiation. Gcm2, together with gcm, is required for the proliferation of plasmatocyte precursors, the expression of Croquemort protein, and the ability of plasmatocytes to convert into macrophages. This Drosophila melanogaster (Fruit fly) protein is Transcription factor glial cells missing 2 (gcm2).